A 191-amino-acid polypeptide reads, in one-letter code: Repressor Rok (191 aa).

Positions 2-43 (FNEREALRLRLEQLNEAEVKVIREYQIERDKIYAKLRELDRN) form a coiled coil. Over residues 75-96 (SYQPQSQQQSVQPQLQSISSLP) the composition is skewed to low complexity. The interval 75 to 116 (SYQPQSQQQSVQPQLQSISSLPAGIPDGTTRRRRGTARPGSK) is disordered. The interval 95-191 (LPAGIPDGTT…EIESAESANE (97 aa)) is DNA-binding.

Its subcellular location is the cytoplasm. It is found in the nucleoid. Repressor of comK, the master regulator of competence development. Overexpression seems to be lethal. Represses at least 20 genes that specify membrane-localized and secreted proteins, including some that encode products with antibiotic activity. Binds to many AT-rich sites in the chromosome, many of which are known or thought to derive from horizontal gene transfer; helps keep mobile element ICEBs1 quiescent in the genome. Binds to its own promoter and is thus probably autoregulatory. This is Repressor Rok from Bacillus subtilis (strain 168).